The sequence spans 699 residues: MDGTPSSGPPRVEAPHLLAPLQTHSQLVALTPQFKSQQSQPQSQSQYPSLINPDSYSSSSPYRLDCGAGIGQGIEDGEDYDQEESNCVTNPEPQPEHQHQYLPQLLDLVADNLEQALIVPRIHQHPQSNNCNSPESFHMMNQSHHQQSEMYYPQYPTQQYNPYPYPTNGAHAPAVSTPMPGPQNVLPVPSALSNQGAMPQAAYSNNAPAGNFDTTGQHNPPGMKPRVTATLWEDEGSLCFQVEARGICVARREDNHMINGTKLLNVAGMTRGRRDGILKSEKVRHVVKIGPMHLKGVWIPYDRALDFANKEKITELLYPLFVHNIGALLYHPSNSNRTSQVMAAAERKKNEAIVGNRSLPSLVQSHHQMMPAMPTGYTSQQPLTNGHQSMANTPQPLTNGSQPPMNGSQTPMNGPQPPMQNGGSMLKRVREDDDDLHRSGPNGHDPMNNIHGMPNGYPHQSPLGSVHQPPMQNGNDGGLKRGREEHDDMHRAGPNGHDPMNNMPGGMPSLPNYAPPPLQNLHQPLSNGDSGMLKRGRDDDDDVHRSSPNGHDANGNFELKRRKTETSTSNDMLPQSPYYTLSNGAYQGPMMNSMNHYKRRDDEAETPRPGPNMNDLNNFDLKQRHKTMESSVPAPQYDAMNRPHSSIGNSPAYASAPTGYDHLTRPASTVAVSPSYPAGPGYELARPVTNVPRRQQSFG.

Disordered stretches follow at residues 1 to 20 (MDGT…LLAP) and 31 to 97 (TPQF…QPEH). Residues 32–49 (PQFKSQQSQPQSQSQYPS) show a composition bias toward low complexity. The segment covering 52 to 61 (NPDSYSSSSP) has biased composition (polar residues). Residues 75–84 (EDGEDYDQEE) are compositionally biased toward acidic residues. Residues 226–332 (RVTATLWEDE…HNIGALLYHP (107 aa)) form the HTH APSES-type domain. Residues 260–281 (GTKLLNVAGMTRGRRDGILKSE) constitute a DNA-binding region (H-T-H motif). 3 disordered regions span residues 372–594 (AMPT…MNSM), 599–618 (RRDD…DLNN), and 674–699 (PSYP…QSFG). A compositionally biased stretch (polar residues) spans 376–423 (GYTSQQPLTNGHQSMANTPQPLTNGSQPPMNGSQTPMNGPQPPMQNGG). 2 stretches are compositionally biased toward basic and acidic residues: residues 428–438 (RVREDDDDLHR) and 478–491 (GLKR…DMHR). Residues 520–529 (NLHQPLSNGD) are compositionally biased toward polar residues. Residues 535-545 (RGRDDDDDVHR) show a composition bias toward basic and acidic residues. A compositionally biased stretch (polar residues) spans 566–594 (TSTSNDMLPQSPYYTLSNGAYQGPMMNSM). Positions 669 to 695 (TVAVSPSYPAGPGYELARPVTNVPRRQ) are nuclear localization domain.

It belongs to the EFG1/PHD1/stuA family.

The protein resides in the nucleus. In terms of biological role, transcription factor that regulates asexual reproduction. Binds the StuA-response elements (StRE) with the consensus sequence 5'-(A/T)CGCG(T/A)N(A/C)-3' at the promoters of target genes. Controls the expression of the gene clusters involved in the production of deoxynivalenol (DON) and 15-acetyldeoxynivalenol (15ADON). Regulates the expression of genes involved in chitin and glucan metabolism. Also controls catalase activity and cell surface hydrophobicity. Plays an important role in pathogenicity. This chain is Cell pattern formation-associated protein StuA, found in Gibberella zeae (strain ATCC MYA-4620 / CBS 123657 / FGSC 9075 / NRRL 31084 / PH-1) (Wheat head blight fungus).